The primary structure comprises 65 residues: Large ribosomal subunit protein bL35 (65 aa).

The protein belongs to the bacterial ribosomal protein bL35 family.

In Rhodospirillum rubrum (strain ATCC 11170 / ATH 1.1.1 / DSM 467 / LMG 4362 / NCIMB 8255 / S1), this protein is Large ribosomal subunit protein bL35.